Consider the following 251-residue polypeptide: Phosphate import ATP-binding protein PstB (251 aa).

An ABC transporter domain is found at 5–246 (IEIENFSAYY…PKNRLTEEYL (242 aa)). 37 to 44 (GPSGCGKT) contributes to the ATP binding site.

The protein belongs to the ABC transporter superfamily. Phosphate importer (TC 3.A.1.7) family. The complex is composed of two ATP-binding proteins (PstB), two transmembrane proteins (PstC and PstA) and a solute-binding protein (PstS).

The protein localises to the cell inner membrane. The catalysed reaction is phosphate(out) + ATP + H2O = ADP + 2 phosphate(in) + H(+). Part of the ABC transporter complex PstSACB involved in phosphate import. Responsible for energy coupling to the transport system. This chain is Phosphate import ATP-binding protein PstB, found in Thermotoga maritima (strain ATCC 43589 / DSM 3109 / JCM 10099 / NBRC 100826 / MSB8).